The sequence spans 250 residues: 2,3-bisphosphoglycerate-dependent phosphoglycerate mutase (250 aa).

Residues 8–15 (RHGESQWN), 21–22 (TG), arginine 60, 87–90 (ERHY), lysine 98, 114–115 (RR), and 183–184 (GN) each bind substrate. Histidine 9 serves as the catalytic Tele-phosphohistidine intermediate. Glutamate 87 serves as the catalytic Proton donor/acceptor.

It belongs to the phosphoglycerate mutase family. BPG-dependent PGAM subfamily. As to quaternary structure, homodimer.

The enzyme catalyses (2R)-2-phosphoglycerate = (2R)-3-phosphoglycerate. The protein operates within carbohydrate degradation; glycolysis; pyruvate from D-glyceraldehyde 3-phosphate: step 3/5. Its function is as follows. Catalyzes the interconversion of 2-phosphoglycerate and 3-phosphoglycerate. The sequence is that of 2,3-bisphosphoglycerate-dependent phosphoglycerate mutase from Bordetella avium (strain 197N).